Reading from the N-terminus, the 221-residue chain is Proline-rich protein 20A (221 aa).

2 disordered regions span residues 1–103 (MEEP…QRQG) and 137–174 (SLSE…GPQA). Low complexity predominate over residues 42 to 53 (PAQPAQPAKPIA). The span at 63-72 (PARPESPPPA) shows a compositional bias: pro residues. Residues 75-93 (GRRRGGSRRPGRGRGRRAG) are compositionally biased toward basic residues.

Belongs to the PRR20 family.

This Homo sapiens (Human) protein is Proline-rich protein 20A (PRR20A).